The chain runs to 215 residues: Oligoribonuclease (215 aa).

The 166-residue stretch at 5–170 (LVWIDCEMTG…ADIHESIREL (166 aa)) folds into the Exonuclease domain. Tyr127 is an active-site residue. Residues 196–215 (LDEGKDAPGPSDSASAPPTG) form a disordered region. Residues 202–215 (APGPSDSASAPPTG) are compositionally biased toward low complexity.

Belongs to the oligoribonuclease family.

The protein localises to the cytoplasm. In terms of biological role, 3'-to-5' exoribonuclease specific for small oligoribonucleotides. This chain is Oligoribonuclease, found in Mycobacterium avium (strain 104).